The sequence spans 241 residues: Sugar fermentation stimulation protein homolog (241 aa).

This sequence belongs to the SfsA family.

In Nostoc sp. (strain PCC 7120 / SAG 25.82 / UTEX 2576), this protein is Sugar fermentation stimulation protein homolog.